We begin with the raw amino-acid sequence, 1070 residues long: Duffy receptor (1070 aa).

The first 20 residues, 1 to 20, serve as a signal peptide directing secretion; that stretch reads MKGKNRSLFVLLVLLLLHKV. Topologically, residues 21–1007 are extracellular; the sequence is NNVLLERTIE…CFTKGGFKDK (987 aa). The interval 116–146 is disordered; the sequence is YMEGKDGGDKTGEEKDGEHKTDSKTDNGKGA. Residues 118-142 show a composition bias toward basic and acidic residues; sequence EGKDGGDKTGEEKDGEHKTDSKTDN. The N-linked (GlcNAc...) asparagine glycan is linked to N183. Residues 211–521 are pvRII region; mediates ACKR1 binding; that stretch reads NTVMKNCNYK…AKKNTQEVVT (311 aa). 2 disulfide bridges follow: C217–C246 and C230–C237. N-linked (GlcNAc...) asparagine glycans are attached at residues N255, N351, and N420. Disulfide bonds link C300–C377, C415–C432, C427–C507, and C436–C505. Composition is skewed to polar residues over residues 525-542, 554-569, and 629-642; these read NAAKSQATNSNPISQPVD, THGNVNSGQDSSTTGK, and GASNSRPSESTVEA. The interval 525–906 is disordered; the sequence is NAAKSQATNS…HLNSNNNLSN (382 aa). The segment covering 697–711 has biased composition (basic and acidic residues); that stretch reads ETGKGQDNDMAKATK. Over residues 712–728 the composition is skewed to low complexity; it reads DSSNSSDGTSSATGDTT. N-linked (GlcNAc...) asparagine glycosylation occurs at N715. The span at 730–748 shows a compositional bias: basic and acidic residues; sequence AVDREINKGVPEDRDKTVG. N787 carries N-linked (GlcNAc...) asparagine glycosylation. Positions 808 to 817 are enriched in low complexity; that stretch reads LSKTESLEST. N825 carries an N-linked (GlcNAc...) asparagine glycan. Basic and acidic residues-rich tracts occupy residues 835–849 and 865–889; these read NGGKEKDLQKHDFKS and AEGHDRDSIKNDKAERRKHMNKDTF. The segment covering 895-906 has biased composition (low complexity); it reads SHHLNSNNNLSN. 2 N-linked (GlcNAc...) asparagine glycosylation sites follow: N903 and N938. The helical transmembrane segment at 1008-1025 threads the bilayer; sequence TYFAAAGALLILLLLIAS. At 1026–1070 the chain is on the cytoplasmic side; it reads RKMIKNDSEEATFNEFEEYCDNIHRIPLMPNNIEHMQPSTPLDYS.

In terms of assembly, homodimer; dimerization (via PvRII region) is promoted by the interaction with human ACKR1. Interacts (via PvRII region) with human ACKR1 (via N-terminal extracellular domain).

The protein localises to the membrane. Functionally, binds to the human erythrocyte Duffy blood group determinant (ACKR1). In Plasmodium vivax (strain Salvador I), this protein is Duffy receptor (PVDR).